The chain runs to 68 residues: Beta-defensin 1 (68 aa).

Positions 1–21 (MRTSYLLLFTLCLLLSEMASG) are cleaved as a signal peptide. The propeptide occupies 22–32 (DNFLTGLGHRS). Disulfide bonds link cysteine 37-cysteine 66, cysteine 44-cysteine 59, and cysteine 49-cysteine 67.

Belongs to the beta-defensin family. As to quaternary structure, monomer. Homodimer.

It localises to the secreted. The protein localises to the membrane. Its function is as follows. Has bactericidal activity. May act as a ligand for C-C chemokine receptor CCR6. Positively regulates the sperm motility and bactericidal activity in a CCR6-dependent manner. Binds to CCR6 and triggers Ca2+ mobilization in the sperm which is important for its motility. The chain is Beta-defensin 1 (DEFB1) from Cercopithecus erythrogaster (Red-bellied monkey).